The chain runs to 81 residues: Centromere protein X (81 aa).

The residue at position 1 (methionine 1) is an N-acetylmethionine.

The protein belongs to the CENP-X/MHF2 family. Heterodimer with CENPX, sometimes called MHF; this interaction stabilizes both partners. MHF heterodimers can assemble to form tetrameric structures. MHF also coassemble with CENPT-CENPW heterodimers at centromeres to form the tetrameric CENP-T-W-S-X complex. Forms a discrete complex with FANCM and CENPX, called FANCM-MHF; this interaction, probably mediated by direct binding between CENPS and FANCM, leads to synergistic activation of double-stranded DNA binding and strongly stimulates FANCM-mediated DNA remodeling. Recruited by FANCM to the Fanconi anemia (FA) core complex, which consists of CENPS, CENPX, FANCA, FANCB, FANCC, FANCE, FANCF, FANCG, FANCL, FANCM, FAAP24 and FAAP100. The FA core complex associates with Bloom syndrome (BLM) complex, which consists of at least BLM, DNA topoisomerase 3-alpha (TOP3A), RMI1/BLAP75, RPA1/RPA70 and RPA2/RPA32. The super complex between FA and BLM is called BRAFT.

The protein localises to the nucleus. The protein resides in the chromosome. It localises to the centromere. It is found in the kinetochore. Its function is as follows. DNA-binding component of the Fanconi anemia (FA) core complex. Required for the normal activation of the FA pathway, leading to monoubiquitination of the FANCI-FANCD2 complex in response to DNA damage, cellular resistance to DNA cross-linking drugs, and prevention of chromosomal breakage. In complex with CENPS (MHF heterodimer), crucial cofactor for FANCM in both binding and ATP-dependent remodeling of DNA. Stabilizes FANCM. In complex with CENPS and FANCM (but not other FANC proteins), rapidly recruited to blocked forks and promotes gene conversion at blocked replication forks. In complex with CENPS, CENPT and CENPW (CENP-T-W-S-X heterotetramer), involved in the formation of a functional kinetochore outer plate, which is essential for kinetochore-microtubule attachment and faithful mitotic progression. As a component of MHF and CENP-T-W-S-X complexes, binds DNA and bends it to form a nucleosome-like structure. DNA-binding function is fulfilled in the presence of CENPS, with the following preference for DNA substates: Holliday junction &gt; double-stranded &gt; splay arm &gt; single-stranded. Does not bind DNA on its own. The polypeptide is Centromere protein X (CENPX) (Pongo abelii (Sumatran orangutan)).